The primary structure comprises 492 residues: N-succinylglutamate 5-semialdehyde dehydrogenase (492 aa).

220–225 (GSASTG) is an NAD(+) binding site. Catalysis depends on residues E243 and C277.

It belongs to the aldehyde dehydrogenase family. AstD subfamily.

It catalyses the reaction N-succinyl-L-glutamate 5-semialdehyde + NAD(+) + H2O = N-succinyl-L-glutamate + NADH + 2 H(+). Its pathway is amino-acid degradation; L-arginine degradation via AST pathway; L-glutamate and succinate from L-arginine: step 4/5. Catalyzes the NAD-dependent reduction of succinylglutamate semialdehyde into succinylglutamate. This is N-succinylglutamate 5-semialdehyde dehydrogenase from Salmonella enteritidis PT4 (strain P125109).